A 166-amino-acid chain; its full sequence is MIYIDNRQNSITVDENLQNTIREVIDYALKEEGMKISYEVSVIFVDNETIREINRENREVDKVTDVLSFPMLEYGEGKVFKDIYEECDFEDEYFDEGNLVLGDIALSLERAEEQSKEYGHSFLREAAYLTVHSVLHLMGYDHMVDEDKIKMRKREEEILSHFDINR.

3 residues coordinate Zn(2+): His132, His136, and His142.

This sequence belongs to the endoribonuclease YbeY family. It depends on Zn(2+) as a cofactor.

Its subcellular location is the cytoplasm. Its function is as follows. Single strand-specific metallo-endoribonuclease involved in late-stage 70S ribosome quality control and in maturation of the 3' terminus of the 16S rRNA. This chain is Endoribonuclease YbeY, found in Clostridium acetobutylicum (strain ATCC 824 / DSM 792 / JCM 1419 / IAM 19013 / LMG 5710 / NBRC 13948 / NRRL B-527 / VKM B-1787 / 2291 / W).